The sequence spans 477 residues: Glycogen synthase 1 (477 aa).

Lys-15 lines the ADP-alpha-D-glucose pocket.

The protein belongs to the glycosyltransferase 1 family. Bacterial/plant glycogen synthase subfamily.

The catalysed reaction is [(1-&gt;4)-alpha-D-glucosyl](n) + ADP-alpha-D-glucose = [(1-&gt;4)-alpha-D-glucosyl](n+1) + ADP + H(+). It functions in the pathway glycan biosynthesis; glycogen biosynthesis. Its function is as follows. Synthesizes alpha-1,4-glucan chains using ADP-glucose. This is Glycogen synthase 1 (glgA1) from Synechocystis sp. (strain ATCC 27184 / PCC 6803 / Kazusa).